The chain runs to 262 residues: Putative ABC transporter ATP-binding protein SAV_3608 (262 aa).

One can recognise an ABC transporter domain in the interval 18–248 (LDVAGLAFAY…DTLMRAHRLE (231 aa)). An ATP-binding site is contributed by 51–58 (GPNGAGKT).

It belongs to the ABC transporter superfamily.

Its subcellular location is the cell membrane. In terms of biological role, probably part of an ABC transporter complex. Responsible for energy coupling to the transport system. In Streptomyces avermitilis (strain ATCC 31267 / DSM 46492 / JCM 5070 / NBRC 14893 / NCIMB 12804 / NRRL 8165 / MA-4680), this protein is Putative ABC transporter ATP-binding protein SAV_3608.